Here is a 645-residue protein sequence, read N- to C-terminus: DEAD-box ATP-dependent RNA helicase 46 (645 aa).

Disordered stretches follow at residues Met1 to Lys22 and Tyr44 to Glu137. One can recognise a WW domain in the interval Pro15 to Ser49. Positions Val60–Ser72 are enriched in low complexity. Over residues Gly77–Lys91 the composition is skewed to basic and acidic residues. Residues Ser108–Asn136 are compositionally biased toward low complexity. Residues Met161–Ala189 carry the Q motif motif. In terms of domain architecture, Helicase ATP-binding spans Trp192–Val366. Ala205 to Thr212 is an ATP binding site. A DEAD box motif is present at residues Asp314–Asp317. In terms of domain architecture, Helicase C-terminal spans Arg395–Ala539. The disordered stretch occupies residues Pro532–Arg645. Over residues Ser556–Gly597 the composition is skewed to gly residues. Residues Ser598–Ser608 are compositionally biased toward low complexity. Residues Gly612–Arg623 are compositionally biased toward basic and acidic residues. The span at Gly624–Arg634 shows a compositional bias: low complexity.

The protein belongs to the DEAD box helicase family. DDX5/DBP2 subfamily.

It carries out the reaction ATP + H2O = ADP + phosphate + H(+). This chain is DEAD-box ATP-dependent RNA helicase 46 (RH46), found in Arabidopsis thaliana (Mouse-ear cress).